The following is a 310-amino-acid chain: Upstream stimulatory factor 1 (310 aa).

Positions 1-17 are enriched in polar residues; the sequence is MKGQQKTAETEEGTVQI. Disordered stretches follow at residues 1 to 26 and 171 to 209; these read MKGQQKTAETEEGTVQIQEGAVATGE and QGGSQRSIAPRTHPYSPKSEAPRTTRDEKRRAQHNEVER. A compositionally biased stretch (basic and acidic residues) spans 190-209; sequence EAPRTTRDEKRRAQHNEVER. Residues 199-254 form the bHLH domain; that stretch reads KRRAQHNEVERRRRDKINNWIVQLSKIIPDCSMESTKSGQSKGGILSKACDYIQEL. The leucine-zipper stretch occupies residues 271–292; it reads LQLDNDVLRQQVEDLKNKNLLL. Residue Lys306 forms a Glycyl lysine isopeptide (Lys-Gly) (interchain with G-Cter in SUMO2) linkage.

Efficient DNA binding requires dimerization with another bHLH protein. Binds DNA as a homodimer or a heterodimer (USF1/USF2).

It localises to the nucleus. Transcription factor that binds to a symmetrical DNA sequence (E-boxes) (5'-CACGTG-3') that is found in a variety of viral and cellular promoters. This is Upstream stimulatory factor 1 (USF1) from Bos taurus (Bovine).